A 161-amino-acid polypeptide reads, in one-letter code: Nucleotide-binding protein Nmul_A1044 (161 aa).

Belongs to the YajQ family.

Nucleotide-binding protein. In Nitrosospira multiformis (strain ATCC 25196 / NCIMB 11849 / C 71), this protein is Nucleotide-binding protein Nmul_A1044.